The primary structure comprises 288 residues: Centromere protein P (288 aa).

A coiled-coil region spans residues 1–71 (MDAELAEVRA…HLESELSFLS (71 aa)). At Ser38 the chain carries Phosphoserine.

This sequence belongs to the CENP-P/CTF19 family. In terms of assembly, component of the CENPA-CAD complex, composed of CENPI, CENPK, CENPL, CENPO, CENPP, CENPQ, CENPR and CENPS. The CENPA-CAD complex interacts with the CENPA-NAC complex, at least composed of CENPA, CENPC, CENPH, CENPM, CENPN, CENPT and CENPU.

It localises to the nucleus. Its subcellular location is the chromosome. It is found in the centromere. Its function is as follows. Component of the CENPA-CAD (nucleosome distal) complex, a complex recruited to centromeres which is involved in assembly of kinetochore proteins, mitotic progression and chromosome segregation. May be involved in incorporation of newly synthesized CENPA into centromeres via its interaction with the CENPA-NAC complex. In Homo sapiens (Human), this protein is Centromere protein P (CENPP).